The following is a 58-amino-acid chain: uncharacterized protein (58 aa).

A coiled-coil region spans residues 3-52 (KVILEHLQRIEKQLEILNSKIENFLGFEELSEEELKELDEIEAKMEKGEK).

This is an uncharacterized protein from Archaeoglobus fulgidus (strain ATCC 49558 / DSM 4304 / JCM 9628 / NBRC 100126 / VC-16).